A 334-amino-acid polypeptide reads, in one-letter code: Transposase for insertion sequence element IS1328 (334 aa).

It belongs to the transposase IS1111A/IS1328/IS1533 family.

Required for the transposition of the insertion element. This is Transposase for insertion sequence element IS1328 from Yersinia enterocolitica.